Reading from the N-terminus, the 334-residue chain is N-acetyl-gamma-glutamyl-phosphate reductase (334 aa).

The active site involves cysteine 154.

The protein belongs to the NAGSA dehydrogenase family. Type 1 subfamily.

The protein localises to the cytoplasm. It carries out the reaction N-acetyl-L-glutamate 5-semialdehyde + phosphate + NADP(+) = N-acetyl-L-glutamyl 5-phosphate + NADPH + H(+). It participates in amino-acid biosynthesis; L-arginine biosynthesis; N(2)-acetyl-L-ornithine from L-glutamate: step 3/4. Its function is as follows. Catalyzes the NADPH-dependent reduction of N-acetyl-5-glutamyl phosphate to yield N-acetyl-L-glutamate 5-semialdehyde. This is N-acetyl-gamma-glutamyl-phosphate reductase from Yersinia pseudotuberculosis serotype I (strain IP32953).